Here is a 159-residue protein sequence, read N- to C-terminus: Globin C, coelomic (159 aa).

At glycine 2 the chain carries N-acetylglycine. Residues 12–158 (DLTLAQKKIV…VQAVLLVKHG (147 aa)) enclose the Globin domain. Heme b-binding residues include histidine 74 and histidine 105.

Belongs to the globin family. Monomer.

This is Globin C, coelomic from Molpadia arenicola (Sea cucumber).